The chain runs to 236 residues: 2,3,4,5-tetrahydropyridine-2,6-dicarboxylate N-acetyltransferase (236 aa).

Belongs to the transferase hexapeptide repeat family. DapH subfamily.

The catalysed reaction is (S)-2,3,4,5-tetrahydrodipicolinate + acetyl-CoA + H2O = L-2-acetamido-6-oxoheptanedioate + CoA. It participates in amino-acid biosynthesis; L-lysine biosynthesis via DAP pathway; LL-2,6-diaminopimelate from (S)-tetrahydrodipicolinate (acetylase route): step 1/3. Its function is as follows. Catalyzes the transfer of an acetyl group from acetyl-CoA to tetrahydrodipicolinate. This is 2,3,4,5-tetrahydropyridine-2,6-dicarboxylate N-acetyltransferase from Clostridium botulinum (strain Loch Maree / Type A3).